The primary structure comprises 444 residues: Na(+)-translocating NADH-quinone reductase subunit A (444 aa).

The protein belongs to the NqrA family. As to quaternary structure, composed of six subunits; NqrA, NqrB, NqrC, NqrD, NqrE and NqrF.

It carries out the reaction a ubiquinone + n Na(+)(in) + NADH + H(+) = a ubiquinol + n Na(+)(out) + NAD(+). Functionally, NQR complex catalyzes the reduction of ubiquinone-1 to ubiquinol by two successive reactions, coupled with the transport of Na(+) ions from the cytoplasm to the periplasm. NqrA to NqrE are probably involved in the second step, the conversion of ubisemiquinone to ubiquinol. This chain is Na(+)-translocating NADH-quinone reductase subunit A, found in Shewanella denitrificans (strain OS217 / ATCC BAA-1090 / DSM 15013).